We begin with the raw amino-acid sequence, 355 residues long: Vacuolar protein sorting-associated protein 37C (355 aa).

Serine 29 carries the post-translational modification Phosphoserine. In terms of domain architecture, VPS37 C-terminal spans 78 to 167 (VERCQEQKAK…RKPRASQELA (90 aa)). A disordered region spans residues 159-355 (KPRASQELAG…PPPGPAWPGY (197 aa)). Composition is skewed to pro residues over residues 170–186 (APPPRPPPPVRPVPQGT) and 194–214 (PQPPLAMPPYPLPYSPSPSLP). Over residues 291-304 (APSPGYPQQSPYPA) the composition is skewed to low complexity. The span at 321–355 (PGQPQPSVPLQPPYPPGPAPPYGFPPPPGPAWPGY) shows a compositional bias: pro residues.

Belongs to the VPS37 family. As to quaternary structure, component of the ESCRT-I complex (endosomal sorting complex required for transport I) which consists of TSG101, VPS28, a VPS37 protein (VPS37A to -D) and MVB12A or MVB12B in a 1:1:1:1 stoichiometry. Interacts with TSG101, VPS28, MVB12A and MVB12B. Component of the ESCRT-I complex (endosomal sorting complex required for transport I) which consists of TSG101, VPS28, a VPS37 protein (VPS37A to -D) and UBAP1 in a 1:1:1:1 stoichiometry. Interacts with HGS and STAM2. Interacts with CEP55. Phosphorylated by TBK1.

It is found in the late endosome membrane. Component of the ESCRT-I complex, a regulator of vesicular trafficking process. Required for the sorting of endocytic ubiquitinated cargos into multivesicular bodies. May be involved in cell growth and differentiation. The chain is Vacuolar protein sorting-associated protein 37C (VPS37C) from Homo sapiens (Human).